Consider the following 305-residue polypeptide: Protoheme IX farnesyltransferase (305 aa).

9 consecutive transmembrane segments (helical) span residues 31-51 (VISLVIFTGFVGMWLAPYSVH), 52-72 (PFIAGIAVVCIALGAGSAGAI), 96-118 (VIESDEALSFGLITGFFAVFFMA), 123-145 (LLASFLLLFTIFYYICIYTIWLK), 151-171 (NIVIGGVSGALPPVIGYAAVS), 179-199 (IILFLIIFIWTPPHSWALALF), 225-245 (ILIYSILLFIVSLMPFFIGMN), 247-267 (FIYLIIAGILGVVFLYYAGSL), and 281-301 (FAYSIFYLFFIFLLLYSTNTI).

Belongs to the UbiA prenyltransferase family. Protoheme IX farnesyltransferase subfamily.

It localises to the cell inner membrane. It catalyses the reaction heme b + (2E,6E)-farnesyl diphosphate + H2O = Fe(II)-heme o + diphosphate. It functions in the pathway porphyrin-containing compound metabolism; heme O biosynthesis; heme O from protoheme: step 1/1. Converts heme B (protoheme IX) to heme O by substitution of the vinyl group on carbon 2 of heme B porphyrin ring with a hydroxyethyl farnesyl side group. This chain is Protoheme IX farnesyltransferase, found in Rickettsia massiliae (strain Mtu5).